The following is a 279-amino-acid chain: Fatty acid metabolism regulator protein (279 aa).

The HTH gntR-type domain occupies 6 to 74; it reads KSPAGFAEKY…HGKPTKVNQF (69 aa). Positions 34–53 form a DNA-binding region, H-T-H motif; it reads ERELSELIGVTRTTLREVLQ.

As to quaternary structure, homodimer.

It is found in the cytoplasm. Functionally, multifunctional regulator of fatty acid metabolism. The sequence is that of Fatty acid metabolism regulator protein from Vibrio cholerae serotype O1 (strain ATCC 39541 / Classical Ogawa 395 / O395).